Here is a 257-residue protein sequence, read N- to C-terminus: MKPHLLLIDALNLIRRIYAVDANQKHHSDEQMLKASCARVAHACSKLLSSTKATHAIAVFDGDKSWRYHFYKDYKHSRAPMPQILKDALVQFKAAIEETGIVVFEPINDEADDIIATLANKASHNNISSVIVSTDKGFLPFLNEHIAVYDYFKKHYLDQDSIKQRFGVEQKKLVEFWAFAGDKTNDIPGVKGIGTKSAQLLVNNYSSVEDALNDDALSASLRKKLTENMDMYVISKQLVSLRTDINLGFSLKQLRLN.

Residue Asp112 participates in Mg(2+) binding. One can recognise a 5'-3' exonuclease domain in the interval 169-256; that stretch reads EQKKLVEFWA…LGFSLKQLRL (88 aa). K(+) contacts are provided by Phe179, Ala180, Pro188, Val190, and Ile193. The interaction with DNA stretch occupies residues 192 to 197; it reads GIGTKS.

Belongs to the Xni family. The cofactor is Mg(2+). K(+) serves as cofactor.

Functionally, has flap endonuclease activity. During DNA replication, flap endonucleases cleave the 5'-overhanging flap structure that is generated by displacement synthesis when DNA polymerase encounters the 5'-end of a downstream Okazaki fragment. The chain is Flap endonuclease Xni from Pseudoalteromonas translucida (strain TAC 125).